We begin with the raw amino-acid sequence, 572 residues long: DNA mismatch repair protein MutL (572 aa).

The protein belongs to the DNA mismatch repair MutL/HexB family.

In terms of biological role, this protein is involved in the repair of mismatches in DNA. It is required for dam-dependent methyl-directed DNA mismatch repair. May act as a 'molecular matchmaker', a protein that promotes the formation of a stable complex between two or more DNA-binding proteins in an ATP-dependent manner without itself being part of a final effector complex. The protein is DNA mismatch repair protein MutL of Dictyoglomus turgidum (strain DSM 6724 / Z-1310).